Reading from the N-terminus, the 542-residue chain is Chaperonin GroEL (542 aa).

Residues 29 to 32, Lys50, 86 to 90, Gly413, 477 to 479, and Asp493 each bind ATP; these read TLGP, DGTTT, and NAA.

Belongs to the chaperonin (HSP60) family. As to quaternary structure, forms a cylinder of 14 subunits composed of two heptameric rings stacked back-to-back. Interacts with the co-chaperonin GroES.

It is found in the cytoplasm. The catalysed reaction is ATP + H2O + a folded polypeptide = ADP + phosphate + an unfolded polypeptide.. Together with its co-chaperonin GroES, plays an essential role in assisting protein folding. The GroEL-GroES system forms a nano-cage that allows encapsulation of the non-native substrate proteins and provides a physical environment optimized to promote and accelerate protein folding. The sequence is that of Chaperonin GroEL from Solibacter usitatus (strain Ellin6076).